The following is a 556-amino-acid chain: Solute carrier family 22 member 20 (556 aa).

Topologically, residues 1–15 are cytoplasmic; it reads MAFTDLLDALGGVGR. A helical transmembrane segment spans residues 16 to 36; that stretch reads FQLVYTALLLLPCGLLACHTF. The Extracellular portion of the chain corresponds to 37–137; sequence LQNFTAAAPP…LVCEARTLRD (101 aa). N39, N54, N61, and N96 each carry an N-linked (GlcNAc...) asparagine glycan. A helical transmembrane segment spans residues 138–158; sequence LAQSIYMSGVLVGAALFGGLA. Over 159 to 166 the chain is Cytoplasmic; that stretch reads DRLGRKAP. The chain crosses the membrane as a helical span at residues 167–187; that stretch reads LVWSYLQLAVSGAATAYVGSF. Topologically, residues 188 to 194 are extracellular; it reads SAYCVFR. A helical membrane pass occupies residues 195-215; the sequence is FLMGMTFSGIILNSLSLVVEW. Over 216-225 the chain is Cytoplasmic; it reads MPTRGRTVAG. Residues 226-246 form a helical membrane-spanning segment; sequence ILLGFSFTLGQLILAGVAYLI. The Extracellular segment spans residues 247 to 250; the sequence is RPWR. Residues 251–271 traverse the membrane as a helical segment; the sequence is WLQFAVSAPFLVFFLYSWWLP. Over 272–339 the chain is Cytoplasmic; the sequence is ESSRWLLLHG…DLFRTPAIRR (68 aa). Residues 340–360 traverse the membrane as a helical segment; that stretch reads VTCCLMGVWFSNSVAYYGLAM. At 361–366 the chain is on the extracellular side; it reads DLQKFG. The chain crosses the membrane as a helical span at residues 367-387; that stretch reads LSIYLVQALFGIIDIPAMLVA. At 388 to 397 the chain is on the cytoplasmic side; it reads TTTMIYVGRR. The helical transmembrane segment at 398 to 418 threads the bilayer; it reads ATVSSFLILAGLMVIANMFMP. Over 419 to 425 the chain is Extracellular; the sequence is EDLQTLR. The chain crosses the membrane as a helical span at residues 426–446; sequence TVQAALGKGCLASSFICVYLF. The Cytoplasmic portion of the chain corresponds to 447 to 457; sequence TGELYPTEIRQ. A helical membrane pass occupies residues 458-478; it reads MGMGFASVNARLGGLVAPLIT. At 479–485 the chain is on the extracellular side; that stretch reads TLGEISP. Residues 486–506 traverse the membrane as a helical segment; it reads VLPPVSFGATSVLAGMAVACF. The Cytoplasmic portion of the chain corresponds to 507-556; that stretch reads LTETRNVPLVETIAAMERRVKQGRSKRDTEQKSEEISLQQLGASPLKETI. The span at 526–541 shows a compositional bias: basic and acidic residues; that stretch reads VKQGRSKRDTEQKSEE. The segment at 526 to 556 is disordered; the sequence is VKQGRSKRDTEQKSEEISLQQLGASPLKETI.

It belongs to the major facilitator (TC 2.A.1) superfamily. Organic cation transporter (TC 2.A.1.19) family. As to expression, highly expressed in olfactory mucosa. Weakly expressed in testis. Not detected in heart, spleen, lung, kidney or brain.

Its subcellular location is the membrane. Its function is as follows. Organic anion transporter that mediates the uptake of estrone sulfate. Inhibited by probenecid, propionate, 2-methylbutyrate, 3-methylbutyrate, benzoate, heptanoate and 2-ethylhaxanoate. May act as an odorant transporter. The sequence is that of Solute carrier family 22 member 20 (Slc22a20) from Mus musculus (Mouse).